The following is a 187-amino-acid chain: Threonylcarbamoyl-AMP synthase (187 aa).

A YrdC-like domain is found at 4 to 187; that stretch reads NHTDDPFLLD…GHSGQTIRDN (184 aa). The interval 168-187 is disordered; the sequence is GSRSPSKIRHGHSGQTIRDN.

Belongs to the SUA5 family. TsaC subfamily.

Its subcellular location is the cytoplasm. The enzyme catalyses L-threonine + hydrogencarbonate + ATP = L-threonylcarbamoyladenylate + diphosphate + H2O. In terms of biological role, required for the formation of a threonylcarbamoyl group on adenosine at position 37 (t(6)A37) in tRNAs that read codons beginning with adenine. Catalyzes the conversion of L-threonine, HCO(3)(-)/CO(2) and ATP to give threonylcarbamoyl-AMP (TC-AMP) as the acyladenylate intermediate, with the release of diphosphate. This Pseudoalteromonas atlantica (strain T6c / ATCC BAA-1087) protein is Threonylcarbamoyl-AMP synthase.